A 447-amino-acid polypeptide reads, in one-letter code: Dihydroorotase (447 aa).

Positions 81 and 83 each coordinate Zn(2+). Residues His-83–Arg-85 and Asn-115 contribute to the substrate site. Residues Asp-171, His-198, and His-252 each coordinate Zn(2+). Position 298 (Asn-298) interacts with substrate. Asp-325 lines the Zn(2+) pocket. Asp-325 is an active-site residue. Substrate is bound by residues His-329 and Phe-343 to Gly-344.

It belongs to the metallo-dependent hydrolases superfamily. DHOase family. Class I DHOase subfamily. Zn(2+) serves as cofactor.

The catalysed reaction is (S)-dihydroorotate + H2O = N-carbamoyl-L-aspartate + H(+). It participates in pyrimidine metabolism; UMP biosynthesis via de novo pathway; (S)-dihydroorotate from bicarbonate: step 3/3. In terms of biological role, catalyzes the reversible cyclization of carbamoyl aspartate to dihydroorotate. This Ehrlichia chaffeensis (strain ATCC CRL-10679 / Arkansas) protein is Dihydroorotase.